The chain runs to 367 residues: 1-deoxy-D-xylulose 5-phosphate reductoisomerase (367 aa).

Residues T10, G11, S12, I13, G34, K35, N36, and N112 each coordinate NADPH. K113 serves as a coordination point for 1-deoxy-D-xylulose 5-phosphate. E114 provides a ligand contact to NADPH. D138 is a binding site for Mn(2+). Positions 139, 140, 164, and 186 each coordinate 1-deoxy-D-xylulose 5-phosphate. Position 140 (E140) interacts with Mn(2+). G192 provides a ligand contact to NADPH. 1-deoxy-D-xylulose 5-phosphate is bound by residues S199, N204, K205, and E208. Position 208 (E208) interacts with Mn(2+).

Belongs to the DXR family. Requires Mg(2+) as cofactor. Mn(2+) is required as a cofactor.

The enzyme catalyses 2-C-methyl-D-erythritol 4-phosphate + NADP(+) = 1-deoxy-D-xylulose 5-phosphate + NADPH + H(+). It functions in the pathway isoprenoid biosynthesis; isopentenyl diphosphate biosynthesis via DXP pathway; isopentenyl diphosphate from 1-deoxy-D-xylulose 5-phosphate: step 1/6. In terms of biological role, catalyzes the NADPH-dependent rearrangement and reduction of 1-deoxy-D-xylulose-5-phosphate (DXP) to 2-C-methyl-D-erythritol 4-phosphate (MEP). In Thermus thermophilus (strain ATCC BAA-163 / DSM 7039 / HB27), this protein is 1-deoxy-D-xylulose 5-phosphate reductoisomerase.